Reading from the N-terminus, the 175-residue chain is B9 domain-containing protein 2 (175 aa).

The region spanning 2–118 (AEVHVIGQII…DCPTWRPLGS (117 aa)) is the C2 B9-type domain.

It belongs to the B9D family. In terms of assembly, part of the tectonic-like complex (also named B9 complex). Interacts with TUBG1. As to expression, highest expression in thymus and skeletal muscle. Also expressed in spleen, kidney, lung, heart, microglia and liver. Detected in brain (at protein level).

The protein localises to the cytoplasm. It is found in the cytoskeleton. It localises to the cilium basal body. The protein resides in the cilium axoneme. Its subcellular location is the nucleus. Its function is as follows. Component of the tectonic-like complex, a complex localized at the transition zone of primary cilia and acting as a barrier that prevents diffusion of transmembrane proteins between the cilia and plasma membranes. In Mus musculus (Mouse), this protein is B9 domain-containing protein 2 (B9d2).